The chain runs to 226 residues: Late protein I226R (226 aa).

The N-terminal stretch at 1 to 16 (MKMETFLVCLFHNADG) is a signal peptide. 2 N-linked (GlcNAc...) asparagine; by host glycosylation sites follow: asparagine 142 and asparagine 164.

The protein belongs to the asfivirus I226R family.

Its function is as follows. Plays a role in the inhibition of host NF-kappa-B and IRF3 signaling pathways. Mechanistically, promotes the degradation of host IKBKG through enhancing its ubiquitination leading to inhibition of both pathways. This African swine fever virus (isolate Warthog/Namibia/Wart80/1980) (ASFV) protein is Late protein I226R.